The following is a 413-amino-acid chain: Probable alpha-tubulin polyglutamylase Ttll1 (413 aa).

A TTL domain is found at 2-370 (ASKKLKYKTD…DDWNDDSSKT (369 aa)). Residues 184-187 (SRYI), K197, and D199 contribute to the ATP site.

Belongs to the tubulin polyglutamylase family.

It is found in the cytoplasm. The protein localises to the cytoskeleton. Its subcellular location is the cilium basal body. It localises to the contractile vacuole. In terms of biological role, probable tubulin polyglutamylase with a strong preference for alpha-tubulin. Modifies alpha-tubulin, generating side chains of glutamate on the gamma-carboxyl groups of specific glutamate residues within the C-terminal tail of alpha-tubulin. This is Probable alpha-tubulin polyglutamylase Ttll1 (Ttll1) from Tetrahymena thermophila (strain SB210).